Reading from the N-terminus, the 123-residue chain is UPF0738 protein BCG9842_B4089 (123 aa).

This sequence belongs to the UPF0738 family.

The chain is UPF0738 protein BCG9842_B4089 from Bacillus cereus (strain G9842).